Reading from the N-terminus, the 152-residue chain is Endoribonuclease YbeY (152 aa).

Residues histidine 113, histidine 117, and histidine 123 each coordinate Zn(2+).

Belongs to the endoribonuclease YbeY family. Zn(2+) serves as cofactor.

It is found in the cytoplasm. Functionally, single strand-specific metallo-endoribonuclease involved in late-stage 70S ribosome quality control and in maturation of the 3' terminus of the 16S rRNA. The protein is Endoribonuclease YbeY of Delftia acidovorans (strain DSM 14801 / SPH-1).